Consider the following 113-residue polypeptide: RING-box protein 2 (113 aa).

Positions 1–26 (MADVEDGEETCALASHSGSSGSKSGG) are disordered. A2 carries the post-translational modification N-acetylalanine. Phosphothreonine; by CK2 is present on T10. Zn(2+) is bound by residues C50, C53, C61, C64, C73, C80, H82, H85, C87, C88, C99, and C102. Residues 61-103 (CLRCQAENKQEDCVVVWGECNHSFHNCCMSLWVKQNNRCPLCQ) form an RING-type zinc finger.

This sequence belongs to the RING-box family. Catalytic component of multiple cullin-5-RING E3 ubiquitin-protein ligase complexes (ECS complexes, also named CRL5 complexes) composed of CUL5, Elongin BC (ELOB and ELOC), RNF7/RBX2 and a variable SOCS box domain-containing protein as substrate-specific recognition component. Also interacts (with lower preference) with CUL1, CUL2, CUL3, CUL4A and CUL4B; additional evidence is however required to confirm this result in vivo. Interacts with UBE2F. Interacts with CSNK2B, the interaction is not affected by phosphorylation by CK2. May also interact with DCUN1D1, DCUN1D2, DCUN1D3, DCUN1D4 and DCUN1D5. As to quaternary structure, (Microbial infection) Following infection by HIV-1 virus, component of a cullin-5-RING E3 ubiquitin-protein ligase complex (ECS complex) hijacked by the HIV-1 Vif protein. In terms of processing, phosphorylation at Thr-10 by CK2 promotes its degradation by the proteasome. As to expression, expressed in heart, liver, skeletal muscle and pancreas. At very low levels expressed in brain, placenta and lung.

It is found in the cytoplasm. The protein resides in the nucleus. It catalyses the reaction S-ubiquitinyl-[E2 ubiquitin-conjugating enzyme]-L-cysteine + [acceptor protein]-L-lysine = [E2 ubiquitin-conjugating enzyme]-L-cysteine + N(6)-ubiquitinyl-[acceptor protein]-L-lysine.. The enzyme catalyses S-[NEDD8-protein]-yl-[E2 NEDD8-conjugating enzyme]-L-cysteine + [cullin]-L-lysine = [E2 NEDD8-conjugating enzyme]-L-cysteine + N(6)-[NEDD8-protein]-yl-[cullin]-L-lysine.. It participates in protein modification; protein ubiquitination. It functions in the pathway protein modification; protein neddylation. In terms of biological role, catalytic component of multiple cullin-5-RING E3 ubiquitin-protein ligase complexes (ECS complexes), which mediate the ubiquitination and subsequent proteasomal degradation of target proteins. It is thereby involved in various biological processes, such as cell cycle progression, signal transduction and transcription. The functional specificity of the E3 ubiquitin-protein ligase ECS complexes depend on the variable SOCS box-containing substrate recognition component. Within ECS complexes, RNF7/RBX2 recruits the E2 ubiquitination enzyme to the complex via its RING-type and brings it into close proximity to the substrate. Catalytic subunit of various SOCS-containing ECS complexes, such as the ECS(SOCS7) complex, that regulate reelin signaling by mediating ubiquitination and degradation of DAB1. The ECS(SOCS2) complex mediates the ubiquitination and subsequent proteasomal degradation of phosphorylated EPOR and GHR. Promotes ubiquitination and degradation of NF1, thereby regulating Ras protein signal transduction. As part of the ECS(ASB9) complex, catalyzes ubiquitination and degradation of CKB. The ECS(SPSB3) complex catalyzes ubiquitination of nuclear CGAS. As part of the ECS(RAB40C) complex, mediates ANKRD28 ubiquitination and degradation, thereby inhibiting protein phosphatase 6 (PP6) complex activity and focal adhesion assembly during cell migration. As part of some ECS complex, catalyzes 'Lys-11'-linked ubiquitination and degradation of BTRC. ECS complexes and ARIH2 collaborate in tandem to mediate ubiquitination of target proteins; ARIH2 mediating addition of the first ubiquitin on CRLs targets. Specifically catalyzes the neddylation of CUL5 via its interaction with UBE2F. Does not catalyze neddylation of other cullins (CUL1, CUL2, CUL3, CUL4A or CUL4B). May play a role in protecting cells from apoptosis induced by redox agents. Inactive. Its function is as follows. (Microbial infection) Following infection by HIV-1 virus, catalytic component of a cullin-5-RING E3 ubiquitin-protein ligase complex (ECS complex) hijacked by the HIV-1 Vif protein, which catalyzes ubiquitination and degradation of APOBEC3F and APOBEC3G. This Homo sapiens (Human) protein is RING-box protein 2.